The sequence spans 419 residues: Hyaluronan synthase (419 aa).

The next 5 membrane-spanning stretches (helical) occupy residues 8–28 (LIVL…MYLF), 33–53 (VGIY…LSFL), 318–338 (IVAL…VAIG), 345–365 (AIQL…IVAL), and 376–396 (PASF…LQPL).

Belongs to the NodC/HAS family. It depends on Mg(2+) as a cofactor.

It is found in the cell membrane. It catalyses the reaction [hyaluronan](n) + UDP-N-acetyl-alpha-D-glucosamine = N-acetyl-beta-D-glucosaminyl-(1-&gt;4)-[hyaluronan](n) + UDP + H(+). The catalysed reaction is N-acetyl-beta-D-glucosaminyl-(1-&gt;4)-[hyaluronan](n) + UDP-alpha-D-glucuronate = [hyaluronan](n+1) + UDP + H(+). The protein operates within glycan biosynthesis; hyaluronan biosynthesis. Functionally, glycosaminoglycan synthesis. The hyaluronic acid capsule is involved in the pathogenicity of group A Streptococci; it may be the major virulence determinant. The chain is Hyaluronan synthase (hasA) from Streptococcus pyogenes serotype M3 (strain ATCC BAA-595 / MGAS315).